The primary structure comprises 518 residues: Calcium-dependent protein kinase 1 (518 aa).

The span at 1–10 (MGNRTSRHHR) shows a compositional bias: basic residues. The segment at 1 to 49 (MGNRTSRHHRAAPEQPPPQPKPKPQPQQQQQQWPRPQQPTPPPAAAPDA) is disordered. Gly-2 carries the N-myristoyl glycine lipid modification. Positions 14–25 (EQPPPQPKPKPQ) are enriched in pro residues. The span at 26-35 (PQQQQQQWPR) shows a compositional bias: low complexity. A compositionally biased stretch (pro residues) spans 36-45 (PQQPTPPPAA). The Protein kinase domain maps to 66-324 (YTFGRELGRG…SAEILNHPWI (259 aa)). ATP contacts are provided by residues 72-80 (LGRGQFGVT) and Lys-95. Asp-190 acts as the Proton acceptor in catalysis. The segment at 330 to 360 (APDKPLDITVISRMKQFRAMNKLKKVALKVV) is autoinhibitory domain. EF-hand domains are found at residues 367–402 (EEIT…LGTK), 403–438 (ISES…MNRL), 439–474 (EKED…YDMG), and 475–509 (DDKT…NNPE). Ca(2+)-binding residues include Asp-380, Asp-382, Ser-384, Thr-386, Glu-391, Asp-416, Asp-418, Asn-420, Thr-422, Glu-427, Asp-452, Asp-454, Ser-456, Tyr-458, Glu-463, Asp-487, Asp-489, Asp-491, Arg-493, and Glu-498.

Belongs to the protein kinase superfamily. Ser/Thr protein kinase family. CDPK subfamily. As to expression, expressed in roots and leaf blades.

The protein localises to the membrane. It catalyses the reaction L-seryl-[protein] + ATP = O-phospho-L-seryl-[protein] + ADP + H(+). It carries out the reaction L-threonyl-[protein] + ATP = O-phospho-L-threonyl-[protein] + ADP + H(+). Activated by calcium. Autophosphorylation may play an important role in the regulation of the kinase activity. In terms of biological role, may play a role in signal transduction pathways that involve calcium as a second messenger. The sequence is that of Calcium-dependent protein kinase 1 from Oryza sativa subsp. japonica (Rice).